The following is a 1220-amino-acid chain: DNA-directed RNA polymerase subunit beta' (1220 aa).

Zn(2+)-binding residues include Cys-60, Cys-62, Cys-75, and Cys-78. Residues Asp-449, Asp-451, and Asp-453 each contribute to the Mg(2+) site. Cys-818, Cys-892, Cys-899, and Cys-902 together coordinate Zn(2+).

This sequence belongs to the RNA polymerase beta' chain family. The RNAP catalytic core consists of 2 alpha, 1 beta, 1 beta' and 1 omega subunit. When a sigma factor is associated with the core the holoenzyme is formed, which can initiate transcription. It depends on Mg(2+) as a cofactor. Zn(2+) is required as a cofactor.

It carries out the reaction RNA(n) + a ribonucleoside 5'-triphosphate = RNA(n+1) + diphosphate. DNA-dependent RNA polymerase catalyzes the transcription of DNA into RNA using the four ribonucleoside triphosphates as substrates. The chain is DNA-directed RNA polymerase subunit beta' from Lacticaseibacillus paracasei (strain ATCC 334 / BCRC 17002 / CCUG 31169 / CIP 107868 / KCTC 3260 / NRRL B-441) (Lactobacillus paracasei).